Consider the following 216-residue polypeptide: Splicing factor U2AF 23 kDa subunit (216 aa).

A C3H1-type 1 zinc finger spans residues 12 to 40; it reads EQDKVNCSFYYKIGACRHGERCSRKHVKP. Residues 44–141 enclose the RRM domain; the sequence is QTILCPNMYK…RPVYAELSPV (98 aa). The C3H1-type 2 zinc finger occupies 143–170; sequence DFREACCRQHETSECQRGGLCNFMHAKK. Positions 194-216 are disordered; sequence EMKKEPNSDSTNRWVSVTAERKN.

As to quaternary structure, forms a heterodimer with the U2AF large subunit. Can also form a homodimer. U2AF large subunit (U2AF59), U2AF small subunit (U2AF23) and SF1 (bpb1) interact to form a complex required for complex A formation. Interacts with cwf13.

It is found in the nucleus. Necessary for the splicing of pre-mRNA. The SF1-U2AF59-U2AF23 complex has a role in the recognition of the branch site (5'-UACUAAC-3'), the pyrimidine tract and the 3'-splice site at the 3'-end of introns. In Schizosaccharomyces pombe (strain 972 / ATCC 24843) (Fission yeast), this protein is Splicing factor U2AF 23 kDa subunit.